The chain runs to 45 residues: uncharacterized protein (45 aa).

Residues 18 to 45 (RRGRIGVQPSPERRSEVVGPFPLARSLS) are disordered.

This is an uncharacterized protein from Homo sapiens (Human).